The sequence spans 180 residues: Cytidylate kinase 2 (180 aa).

7-15 is a binding site for ATP; the sequence is GKSGCGNTT.

The protein belongs to the cytidylate kinase family. Type 2 subfamily.

Its subcellular location is the cytoplasm. The enzyme catalyses CMP + ATP = CDP + ADP. It catalyses the reaction dCMP + ATP = dCDP + ADP. The protein is Cytidylate kinase 2 (cmk2) of Borreliella burgdorferi (strain ATCC 35210 / DSM 4680 / CIP 102532 / B31) (Borrelia burgdorferi).